We begin with the raw amino-acid sequence, 381 residues long: Chorismate synthase (381 aa).

Arg-41 and Arg-47 together coordinate NADP(+). FMN is bound by residues 127–129, 247–248, Gly-291, 306–310, and Arg-332; these read RAS, QA, and KPIPT.

The protein belongs to the chorismate synthase family. Homotetramer. It depends on FMNH2 as a cofactor.

It carries out the reaction 5-O-(1-carboxyvinyl)-3-phosphoshikimate = chorismate + phosphate. Its pathway is metabolic intermediate biosynthesis; chorismate biosynthesis; chorismate from D-erythrose 4-phosphate and phosphoenolpyruvate: step 7/7. In terms of biological role, catalyzes the anti-1,4-elimination of the C-3 phosphate and the C-6 proR hydrogen from 5-enolpyruvylshikimate-3-phosphate (EPSP) to yield chorismate, which is the branch point compound that serves as the starting substrate for the three terminal pathways of aromatic amino acid biosynthesis. This reaction introduces a second double bond into the aromatic ring system. The polypeptide is Chorismate synthase (Anaeromyxobacter dehalogenans (strain 2CP-1 / ATCC BAA-258)).